A 216-amino-acid polypeptide reads, in one-letter code: Probable GTP-binding protein EngB (216 aa).

Residues 26–200 enclose the EngB-type G domain; the sequence is EGIEIAFAGR…RAKLDTWFAP (175 aa). GTP is bound by residues 34–41, 61–65, 79–82, 146–149, and 179–181; these read GRSNAGKS, GRTQL, DLPG, TKAD, and YSS. Mg(2+)-binding residues include Ser41 and Thr63.

The protein belongs to the TRAFAC class TrmE-Era-EngA-EngB-Septin-like GTPase superfamily. EngB GTPase family. Requires Mg(2+) as cofactor.

Necessary for normal cell division and for the maintenance of normal septation. In Vibrio vulnificus (strain YJ016), this protein is Probable GTP-binding protein EngB.